The primary structure comprises 738 residues: Envelope glycoprotein gp160 (738 aa).

Positions 1–21 (MCGKSLLCVASLLASAYLVYC) are cleaved as a signal peptide. Residues 22 to 670 (TQYVTVFYGV…LTSWIKYIQY (649 aa)) are Extracellular-facing. Residue asparagine 36 is glycosylated (N-linked (GlcNAc...) asparagine; by host). An intrachain disulfide couples cysteine 43 to cysteine 56. 23 N-linked (GlcNAc...) asparagine; by host glycosylation sites follow: asparagine 69, asparagine 113, asparagine 117, asparagine 118, asparagine 132, asparagine 141, asparagine 169, asparagine 182, asparagine 197, asparagine 229, asparagine 232, asparagine 263, asparagine 269, asparagine 280, asparagine 291, asparagine 301, asparagine 356, asparagine 362, asparagine 389, asparagine 402, asparagine 439, asparagine 454, and asparagine 457. 5 cysteine pairs are disulfide-bonded: cysteine 100/cysteine 205, cysteine 107/cysteine 196, cysteine 112/cysteine 153, cysteine 218/cysteine 248, and cysteine 228/cysteine 240. Residues 112-152 (CNSTTNNTTTTGSTTGMSEINETSPSYSDNCTGLGKEEIVN) are V1. The segment at 153–196 (CQFYMTGLERDKKKQYNETWYSKDVVCESNNTKDGKNRCYMNHC) is V2. The interval 296 to 328 (CKRPGNKTVVPITLMSGLVFHSQPINTRPRQAW) is V3. Cysteine 296 and cysteine 329 are disulfide-bonded. 2 disulfide bridges follow: cysteine 381/cysteine 438 and cysteine 388/cysteine 411. Residues 388–411 (CNMTWFLNWVENRPNQTQHNYAPC) are V4. A V5 region spans residues 454–460 (NQTNITF). The tract at residues 503–523 (GVFVLGFLGFLATAGSAMGAA) is fusion peptide. An immunosuppression region spans residues 566–582 (LQARVTAIEKYLKDQAQ). N-linked (GlcNAc...) asparagine; by host glycans are attached at residues asparagine 602, asparagine 611, and asparagine 627. Positions 615–636 (QEWEKQVRYLEANISQSLEQAQ) form a coiled coil. The interval 648 to 669 (KLNSWDVFGNWFDLTSWIKYIQ) is MPER; binding to GalCer. The helical transmembrane segment at 671 to 691 (GVYIVVGVIVLRIAIYIVQLL) threads the bilayer. The Cytoplasmic segment spans residues 692–738 (SRLRKGYRPVFSSPPGYLQQIHIHTDRGQPANEGTEEDDRDDDGYDL). Positions 698–701 (YRPV) match the YXXV motif; contains endocytosis signal motif. The disordered stretch occupies residues 716 to 738 (TDRGQPANEGTEEDDRDDDGYDL). Acidic residues predominate over residues 725-738 (GTEEDDRDDDGYDL).

The mature envelope protein (Env) consists of a homotrimer of non-covalently associated gp120-gp41 heterodimers. The resulting complex protrudes from the virus surface as a spike. There seems to be as few as 10 spikes on the average virion. Interacts with human CD4, CCR5 and CXCR4, to form a P4HB/PDI-CD4-CXCR4-gp120 complex. Gp120 also interacts with the C-type lectins CD209/DC-SIGN and CLEC4M/DC-SIGNR (collectively referred to as DC-SIGN(R)). Gp120 and gp41 interact with GalCer. In terms of assembly, the mature envelope protein (Env) consists of a homotrimer of non-covalently associated gp120-gp41 heterodimers. The resulting complex protrudes from the virus surface as a spike. There seems to be as few as 10 spikes on the average virion. In terms of processing, specific enzymatic cleavages in vivo yield mature proteins. Envelope glycoproteins are synthesized as an inactive precursor that is heavily N-glycosylated and processed likely by host cell furin in the Golgi to yield the mature SU and TM proteins. The cleavage site between SU and TM requires the minimal sequence [KR]-X-[KR]-R. Post-translationally, palmitoylation of the transmembrane protein and of Env polyprotein (prior to its proteolytic cleavage) is essential for their association with host cell membrane lipid rafts. Palmitoylation is therefore required for envelope trafficking to classical lipid rafts, but not for viral replication.

The protein resides in the virion membrane. The protein localises to the host cell membrane. It is found in the host endosome membrane. Its function is as follows. The surface protein gp120 (SU) attaches the virus to the host lymphoid cell by binding to the primary receptor CD4. This interaction induces a structural rearrangement creating a high affinity binding site for a chemokine coreceptor like CXCR4 and/or CCR5. This peculiar 2 stage receptor-interaction strategy allows gp120 to maintain the highly conserved coreceptor-binding site in a cryptic conformation, protected from neutralizing antibodies. Since CD4 also displays a binding site for the disulfide-isomerase P4HB/PDI, a P4HB/PDI-CD4-CXCR4-gp120 complex may form. In that complex, P4HB/PDI could reach and reduce gp120 disulfide bonds, causing major conformational changes in gp120. TXN, another PDI family member could also be involved in disulfide rearrangements in Env during fusion. These changes are transmitted to the transmembrane protein gp41 and are thought to activate its fusogenic potential by unmasking its fusion peptide. The surface protein gp120 is a ligand for CD209/DC-SIGN and CLEC4M/DC-SIGNR, which are respectively found on dendritic cells (DCs), and on endothelial cells of liver sinusoids and lymph node sinuses. These interactions allow capture of viral particles at mucosal surfaces by these cells and subsequent transmission to permissive cells. DCs are professional antigen presenting cells, critical for host immunity by inducing specific immune responses against a broad variety of pathogens. They act as sentinels in various tissues where they take up antigen, process it, and present it to T-cells following migration to lymphoid organs. HIV subverts the migration properties of dendritic cells to gain access to CD4+ T-cells in lymph nodes. Virus transmission to permissive T-cells occurs either in trans (without DCs infection, through viral capture and transmission), or in cis (following DCs productive infection, through the usual CD4-gp120 interaction), thereby inducing a robust infection. In trans infection, bound virions remain infectious over days and it is proposed that they are not degraded, but protected in non-lysosomal acidic organelles within the DCs close to the cell membrane thus contributing to the viral infectious potential during DCs' migration from the periphery to the lymphoid tissues. On arrival at lymphoid tissues, intact virions recycle back to DCs' cell surface allowing virus transmission to CD4+ T-cells. Virion capture also seems to lead to MHC-II-restricted viral antigen presentation, and probably to the activation of HIV-specific CD4+ cells. In terms of biological role, the transmembrane protein gp41 (TM) acts as a class I viral fusion protein. Under the current model, the protein has at least 3 conformational states: pre-fusion native state, pre-hairpin intermediate state, and post-fusion hairpin state. During fusion of viral and target intracellular membranes, the coiled coil regions (heptad repeats) assume a trimer-of-hairpins structure, positioning the fusion peptide in close proximity to the C-terminal region of the ectodomain. The formation of this structure appears to drive apposition and subsequent fusion of viral and target cell membranes. Complete fusion occurs in host cell endosomes and is dynamin-dependent, however some lipid transfer might occur at the plasma membrane. The virus undergoes clathrin-dependent internalization long before endosomal fusion, thus minimizing the surface exposure of conserved viral epitopes during fusion and reducing the efficacy of inhibitors targeting these epitopes. Membranes fusion leads to delivery of the nucleocapsid into the cytoplasm. Functionally, the envelope glycoprotein gp160 precursor down-modulates cell surface CD4 antigen by interacting with it in the endoplasmic reticulum and blocking its transport to the cell surface. Its function is as follows. The gp120-gp41 heterodimer seems to contribute to T-cell depletion during HIV-1 infection. The envelope glycoproteins expressed on the surface of infected cells induce apoptosis through an interaction with uninfected cells expressing the receptor (CD4) and the coreceptors CXCR4 or CCR5. This type of bystander killing may be obtained by at least three distinct mechanisms. First, the interaction between the 2 cells can induce cellular fusion followed by nuclear fusion within the syncytium. Syncytia are condemned to die from apoptosis. Second, the 2 interacting cells may not fuse entirely and simply exchange plasma membrane lipids, after a sort of hemifusion process, followed by rapid death. Third, it is possible that virus-infected cells, on the point of undergoing apoptosis, fuse with CD4-expressing cells, in which case apoptosis is rapidly transmitted from one cell to the other and thus occurs in a sort of contagious fashion. The gp120-gp41 heterodimer allows rapid transcytosis of the virus through CD4 negative cells such as simple epithelial monolayers of the intestinal, rectal and endocervical epithelial barriers. Both gp120 and gp41 specifically recognize glycosphingolipids galactosyl-ceramide (GalCer) or 3' sulfo-galactosyl-ceramide (GalS) present in the lipid rafts structures of epithelial cells. Binding to these alternative receptors allows the rapid transcytosis of the virus through the epithelial cells. This transcytotic vesicle-mediated transport of virions from the apical side to the basolateral side of the epithelial cells does not involve infection of the cells themselves. This Human immunodeficiency virus type 2 subtype A (isolate Ghana-1) (HIV-2) protein is Envelope glycoprotein gp160 (env).